Consider the following 210-residue polypeptide: Tumor protein D53 homolog (210 aa).

A coiled-coil region spans residues 22-73 (VTDVDFTSMISEEEKEELKAELAKLEDEISTLRQVLAAKEKHLIEIKQKLGM). The span at 185–197 (SSTAHASAQSSLA) shows a compositional bias: polar residues. Residues 185–210 (SSTAHASAQSSLAGTRLPESEEELQC) are disordered.

Belongs to the TPD52 family. In terms of assembly, forms a homodimer or heterodimer with other members of the family.

In Gallus gallus (Chicken), this protein is Tumor protein D53 homolog (TPD52L1).